The following is a 64-amino-acid chain: Peptide Ctri9677 (64 aa).

The N-terminal stretch at 1–22 is a signal peptide; it reads MKNNTILFTFLIVFLIASQIEA. Leu36 carries the leucine amide modification. Positions 40-64 are excised as a propeptide; sequence SEDREFFDFFTDDNLAALEKALKEY.

The protein belongs to the non-disulfide-bridged peptide (NDBP) superfamily. Short antimicrobial peptide (group 4) family. As to expression, expressed by the venom gland.

The protein resides in the secreted. Antimicrobial peptide. The protein is Peptide Ctri9677 of Chaerilus tricostatus (Scorpion).